Reading from the N-terminus, the 83-residue chain is Mitochondrial import inner membrane translocase subunit Tim8 (83 aa).

Positions 35-60 (CWDVCFSDYRPPSKMDGKTQTCIQNC) match the Twin CX3C motif motif. Cystine bridges form between Cys-35–Cys-60 and Cys-39–Cys-56.

This sequence belongs to the small Tim family. As to quaternary structure, heterohexamer; composed of 3 copies of ddp-1/tim-8 and 3 copies of tin-13/tim-13, named soluble 70 kDa complex. Associates with the TIM22 complex, whose core is composed of tim-22.

The protein localises to the mitochondrion inner membrane. Its function is as follows. Mitochondrial intermembrane chaperone that participates in the import and insertion of some multi-pass transmembrane proteins into the mitochondrial inner membrane. Also required for the transfer of beta-barrel precursors from the TOM complex to the sorting and assembly machinery (SAM complex) of the outer membrane. Acts as a chaperone-like protein that protects the hydrophobic precursors from aggregation and guide them through the mitochondrial intermembrane space. The ddp-1/tim-8-tim-13 complex mediates the import of some proteins while the predominant tim-9/tin-9.1-tim-10/tin-10 70 kDa complex mediates the import of much more proteins. This Caenorhabditis briggsae protein is Mitochondrial import inner membrane translocase subunit Tim8.